Reading from the N-terminus, the 1905-residue chain is Low-density lipoprotein receptor-related protein 4 (1905 aa).

An N-terminal signal peptide occupies residues 1–20 (MRRWWGALLLGALLCAHGIA). At 21-1725 (SSLECACGRS…AAPGEGLHVS (1705 aa)) the chain is on the extracellular side. LDL-receptor class A domains lie at 26-67 (ACGR…DGCT), 70-106 (TCSP…QDCP), 109-144 (ECEE…EQCD), 147-183 (KCSD…ESCP), 190-226 (PCNL…SDCS), 230-266 (PCRS…RNCT), 269-305 (MCTA…ENCE), and 311-350 (QCAS…QNCR). Disulfide bonds link Cys-27–Cys-44, Cys-34–Cys-57, Cys-51–Cys-66, Cys-71–Cys-83, Cys-78–Cys-96, Cys-90–Cys-105, Cys-110–Cys-122, Cys-117–Cys-135, Cys-129–Cys-143, Cys-148–Cys-160, Cys-155–Cys-173, Cys-167–Cys-182, Cys-191–Cys-203, Cys-198–Cys-216, Cys-210–Cys-225, Cys-231–Cys-243, Cys-238–Cys-256, Cys-250–Cys-265, Cys-270–Cys-282, Cys-277–Cys-295, Cys-289–Cys-304, Cys-312–Cys-324, Cys-319–Cys-337, Cys-331–Cys-349, Cys-358–Cys-369, Cys-365–Cys-378, Cys-380–Cys-393, Cys-399–Cys-409, Cys-405–Cys-418, and Cys-420–Cys-433. N-linked (GlcNAc...) asparagine glycosylation is present at Asn-264. One can recognise an EGF-like 1; atypical domain in the interval 354–394 (GEENCNVNNGGCAQKCQMVRGAVQCTCHTGYRLTEDGRTCQ). Residues 395 to 434 (DVNECAEEGYCSQGCTNTEGAFQCWCEAGYELRPDRRSCK) form the EGF-like 2; calcium-binding domain. LDL-receptor class B repeat units follow at residues 480–522 (ELVF…DWVH), 523–565 (DKLY…HPME), 566–609 (GTIY…DYAG), 610–652 (RRMY…FEDS), and 653–693 (LYWT…LHPQ). An N-linked (GlcNAc...) asparagine glycan is attached at Asn-498. The EGF-like 3 domain occupies 698–737 (GKNRCGDNNGGCTHLCLPSGQNYTCACPTGFRKINSHACA). 3 disulfides stabilise this stretch: Cys-702-Cys-713, Cys-709-Cys-722, and Cys-724-Cys-736. N-linked (GlcNAc...) asparagine glycosylation occurs at Asn-719. LDL-receptor class B repeat units lie at residues 785-827 (DHVY…DWVT), 828-870 (NKLY…EPMG), 871-914 (GYMY…DYGS), 915-956 (QRLY…LYGQ), and 957-998 (RIYW…FHRQ). An N-linked (GlcNAc...) asparagine glycan is attached at Asn-901. N-linked (GlcNAc...) asparagine glycosylation occurs at Asn-1077. LDL-receptor class B repeat units follow at residues 1093-1135 (GKVY…DAIG), 1136-1178 (RKVY…YHEM), 1179-1222 (GFMY…DKTS), 1223-1263 (SQLL…LLDS), 1264-1306 (YIYW…DRAQ), 1397-1439 (GKVY…DWVA), 1440-1482 (RNLY…FPRK), 1483-1526 (GYLF…DYDT), 1527-1568 (RRIY…QDRW), and 1569-1610 (IYWT…SPQR). N-linked (GlcNAc...) asparagine glycosylation is found at Asn-1415 and Asn-1467. Residues 1661 to 1696 (ATSMNEKSPVLPNTLPTTLHSSTTKTRTSLEGAGGR) form a disordered region. The span at 1674 to 1690 (TLPTTLHSSTTKTRTSL) shows a compositional bias: low complexity. The chain crosses the membrane as a helical span at residues 1726–1746 (YAIGGLLSILLILLVIAALML). Over 1747 to 1905 (YRHRKSKFTD…ERKLSSESQV (159 aa)) the chain is Cytoplasmic. The segment at 1852–1905 (ASSGSLDDTETEQLLQEEQSECSSVHTAATPERRGSLPDTGWKHERKLSSESQV) is disordered. The span at 1882–1905 (PERRGSLPDTGWKHERKLSSESQV) shows a compositional bias: basic and acidic residues.

It belongs to the LDLR family. In terms of assembly, homooligomer. Interacts with MUSK; the heterodimer forms an AGRIN receptor complex that binds AGRIN resulting in activation of MUSK. Interacts (via the extracellular domain) with SOST; the interaction facilitates the inhibition of Wnt signaling. Interacts with MESD; the interaction promotes glycosylation of LRP4 and its cell-surface expression. In terms of processing, N-glycosylation is required for cell surface location.

It localises to the cell membrane. In terms of biological role, mediates SOST-dependent inhibition of bone formation. Functions as a specific facilitator of SOST-mediated inhibition of Wnt signaling. Plays a key role in the formation and the maintenance of the neuromuscular junction (NMJ), the synapse between motor neuron and skeletal muscle. Directly binds AGRIN and recruits it to the MUSK signaling complex. Mediates the AGRIN-induced phosphorylation of MUSK, the kinase of the complex. The activation of MUSK in myotubes induces the formation of NMJ by regulating different processes including the transcription of specific genes and the clustering of AChR in the postsynaptic membrane. Alternatively, may be involved in the negative regulation of the canonical Wnt signaling pathway, being able to antagonize the LRP6-mediated activation of this pathway. More generally, has been proposed to function as a cell surface endocytic receptor binding and internalizing extracellular ligands for degradation by lysosomes. Plays an essential role in the process of digit differentiation. The sequence is that of Low-density lipoprotein receptor-related protein 4 (Lrp4) from Mus musculus (Mouse).